Consider the following 134-residue polypeptide: Large-conductance mechanosensitive channel (134 aa).

2 helical membrane passes run 16 to 36 and 81 to 101; these read VIDL…VTAL and GDFI…FIVV.

Belongs to the MscL family. Homopentamer.

It is found in the cell inner membrane. In terms of biological role, channel that opens in response to stretch forces in the membrane lipid bilayer. May participate in the regulation of osmotic pressure changes within the cell. This is Large-conductance mechanosensitive channel from Stenotrophomonas maltophilia (strain K279a).